A 106-amino-acid polypeptide reads, in one-letter code: MTSATQFDNVSVVKRANVYFDGKCVSHTVLFPDGTRKTLGVILPCALNFGTDAPELMEVQAGKCRVKLDGSDTWQTYGAGESISVPGKSRFDIEVIETLDYVCSYL.

The protein belongs to the nucleoside phosphorylase PpnP family.

The enzyme catalyses a purine D-ribonucleoside + phosphate = a purine nucleobase + alpha-D-ribose 1-phosphate. The catalysed reaction is adenosine + phosphate = alpha-D-ribose 1-phosphate + adenine. It catalyses the reaction cytidine + phosphate = cytosine + alpha-D-ribose 1-phosphate. It carries out the reaction guanosine + phosphate = alpha-D-ribose 1-phosphate + guanine. The enzyme catalyses inosine + phosphate = alpha-D-ribose 1-phosphate + hypoxanthine. The catalysed reaction is thymidine + phosphate = 2-deoxy-alpha-D-ribose 1-phosphate + thymine. It catalyses the reaction uridine + phosphate = alpha-D-ribose 1-phosphate + uracil. It carries out the reaction xanthosine + phosphate = alpha-D-ribose 1-phosphate + xanthine. Functionally, catalyzes the phosphorolysis of diverse nucleosides, yielding D-ribose 1-phosphate and the respective free bases. Can use uridine, adenosine, guanosine, cytidine, thymidine, inosine and xanthosine as substrates. Also catalyzes the reverse reactions. The protein is Pyrimidine/purine nucleoside phosphorylase of Burkholderia multivorans (strain ATCC 17616 / 249).